The sequence spans 364 residues: Aminomethyltransferase (364 aa).

The protein belongs to the GcvT family. The glycine cleavage system is composed of four proteins: P, T, L and H.

It carries out the reaction N(6)-[(R)-S(8)-aminomethyldihydrolipoyl]-L-lysyl-[protein] + (6S)-5,6,7,8-tetrahydrofolate = N(6)-[(R)-dihydrolipoyl]-L-lysyl-[protein] + (6R)-5,10-methylene-5,6,7,8-tetrahydrofolate + NH4(+). Functionally, the glycine cleavage system catalyzes the degradation of glycine. This Shewanella woodyi (strain ATCC 51908 / MS32) protein is Aminomethyltransferase.